Reading from the N-terminus, the 117-residue chain is Acidic phospholipase A2 (117 aa).

Disulfide bonds link cysteine 11-cysteine 70, cysteine 25-cysteine 116, cysteine 27-cysteine 43, cysteine 42-cysteine 98, cysteine 49-cysteine 91, cysteine 59-cysteine 84, and cysteine 77-cysteine 89. Tyrosine 26, glycine 28, and glycine 30 together coordinate Ca(2+). The active site involves histidine 46. Aspartate 47 lines the Ca(2+) pocket. A glycan (N-linked (GlcNAc...) asparagine) is linked at asparagine 80. Aspartate 92 is a catalytic residue.

It depends on Ca(2+) as a cofactor. In terms of tissue distribution, expressed by the venom gland.

It is found in the secreted. The enzyme catalyses a 1,2-diacyl-sn-glycero-3-phosphocholine + H2O = a 1-acyl-sn-glycero-3-phosphocholine + a fatty acid + H(+). Its function is as follows. Snake venom phospholipase A2 (PLA2) that shows strong myotoxicity and induces edema in mice. Shows no cytotoxicity in vitro. Has a strong anticoagulant effect in vitro. PLA2 catalyzes the calcium-dependent hydrolysis of the 2-acyl groups in 3-sn-phosphoglycerides. The polypeptide is Acidic phospholipase A2 (Micrurus dumerilii (Coral snake)).